Reading from the N-terminus, the 82-residue chain is Cytochrome c oxidase-assembly factor cox-23, mitochondrial (82 aa).

Residues 1 to 27 are disordered; that stretch reads MAQAGSENKEPWNEETRAKFEGKSRSE. Residues 7–27 are compositionally biased toward basic and acidic residues; the sequence is ENKEPWNEETRAKFEGKSRSE. The 43-residue stretch at 29–71 folds into the CHCH domain; that stretch reads LDPCQEAAQRSIRCLHRNQGDRTMCSDYFEAYRECKKQWIERR. Short sequence motifs (cx9C motif) lie at residues 32-42 and 53-63; these read CQEAAQRSIRC and CSDYFEAYREC. 2 cysteine pairs are disulfide-bonded: Cys32-Cys63 and Cys42-Cys53.

It belongs to the COX23 family.

The protein localises to the mitochondrion intermembrane space. Required for the assembly of cytochrome c oxidase. The polypeptide is Cytochrome c oxidase-assembly factor cox-23, mitochondrial (cox-23) (Neurospora crassa (strain ATCC 24698 / 74-OR23-1A / CBS 708.71 / DSM 1257 / FGSC 987)).